The following is a 129-amino-acid chain: Small ribosomal subunit protein uS11 (129 aa).

Belongs to the universal ribosomal protein uS11 family. As to quaternary structure, part of the 30S ribosomal subunit. Interacts with proteins S7 and S18. Binds to IF-3.

Functionally, located on the platform of the 30S subunit, it bridges several disparate RNA helices of the 16S rRNA. Forms part of the Shine-Dalgarno cleft in the 70S ribosome. The polypeptide is Small ribosomal subunit protein uS11 (Idiomarina loihiensis (strain ATCC BAA-735 / DSM 15497 / L2-TR)).